Here is a 407-residue protein sequence, read N- to C-terminus: Aminomethyltransferase, mitochondrial (407 aa).

The transit peptide at 1-29 (MRGGLWQLGQSITRRLGQSDKKTIVRRCY) directs the protein to the mitochondrion. 3 residues coordinate substrate: Glu-234, Arg-265, and Tyr-403.

This sequence belongs to the GcvT family. The glycine cleavage system is composed of four proteins: P, T, L and H.

The protein localises to the mitochondrion. It catalyses the reaction N(6)-[(R)-S(8)-aminomethyldihydrolipoyl]-L-lysyl-[protein] + (6S)-5,6,7,8-tetrahydrofolate = N(6)-[(R)-dihydrolipoyl]-L-lysyl-[protein] + (6R)-5,10-methylene-5,6,7,8-tetrahydrofolate + NH4(+). Functionally, the glycine cleavage system catalyzes the degradation of glycine. This is Aminomethyltransferase, mitochondrial (GDCST) from Flaveria anomala (Yellowtops).